A 92-amino-acid chain; its full sequence is Bombyxin A-9 (92 aa).

The first 19 residues, 1–19 (MKLLLAIALMLTTVMWAST), serve as a signal peptide directing secretion. Gln20 is subject to Pyrrolidone carboxylic acid. 3 cysteine pairs are disulfide-bonded: Cys29/Cys79, Cys41/Cys92, and Cys78/Cys83. Positions 50–71 (SDAQFASYGSAWLMPYSEGRDQ) are cleaved as a propeptide — c peptide like.

This sequence belongs to the insulin family. As to quaternary structure, heterodimer of a B chain and an A chain linked by two disulfide bonds.

It is found in the secreted. Brain peptide responsible for activation of prothoracic glands to produce ecdysone in insects. This chain is Bombyxin A-9 (BBXA9), found in Bombyx mori (Silk moth).